A 273-amino-acid chain; its full sequence is Ribosomal RNA small subunit methyltransferase A (273 aa).

S-adenosyl-L-methionine contacts are provided by Asn-18, Leu-20, Gly-45, Glu-66, Asp-91, and Asn-113.

Belongs to the class I-like SAM-binding methyltransferase superfamily. rRNA adenine N(6)-methyltransferase family. RsmA subfamily.

It is found in the cytoplasm. It catalyses the reaction adenosine(1518)/adenosine(1519) in 16S rRNA + 4 S-adenosyl-L-methionine = N(6)-dimethyladenosine(1518)/N(6)-dimethyladenosine(1519) in 16S rRNA + 4 S-adenosyl-L-homocysteine + 4 H(+). Functionally, specifically dimethylates two adjacent adenosines (A1518 and A1519) in the loop of a conserved hairpin near the 3'-end of 16S rRNA in the 30S particle. May play a critical role in biogenesis of 30S subunits. The chain is Ribosomal RNA small subunit methyltransferase A from Cronobacter sakazakii (strain ATCC BAA-894) (Enterobacter sakazakii).